Reading from the N-terminus, the 285-residue chain is Xanthoxin dehydrogenase (285 aa).

Serine 2 bears the N-acetylserine mark.

The protein belongs to the short-chain dehydrogenases/reductases (SDR) family. In terms of tissue distribution, predominantly in roots and stems, and at lower levels in leaves and seeds.

The protein localises to the cytoplasm. It carries out the reaction 2-cis,4-trans-xanthoxin + NAD(+) = 2-cis-(+)-abscisic aldehyde + NADH + H(+). The enzyme catalyses 2-trans,4-trans-xanthoxin + NAD(+) = 2-trans-(+)-abscisic aldehyde + NADH + H(+). Functionally, involved in the biosynthesis of abscisic acid. Catalyzes the conversion of xanthoxin to abscisic aldehyde. The sequence is that of Xanthoxin dehydrogenase from Arabidopsis thaliana (Mouse-ear cress).